Consider the following 186-residue polypeptide: Ribosome-recycling factor (186 aa).

This sequence belongs to the RRF family.

It localises to the cytoplasm. In terms of biological role, responsible for the release of ribosomes from messenger RNA at the termination of protein biosynthesis. May increase the efficiency of translation by recycling ribosomes from one round of translation to another. The sequence is that of Ribosome-recycling factor from Ralstonia nicotianae (strain ATCC BAA-1114 / GMI1000) (Ralstonia solanacearum).